The following is a 229-amino-acid chain: Large ribosomal subunit protein uL1 (229 aa).

It belongs to the universal ribosomal protein uL1 family. As to quaternary structure, part of the 50S ribosomal subunit.

Binds directly to 23S rRNA. The L1 stalk is quite mobile in the ribosome, and is involved in E site tRNA release. Functionally, protein L1 is also a translational repressor protein, it controls the translation of the L11 operon by binding to its mRNA. The chain is Large ribosomal subunit protein uL1 from Streptococcus pyogenes serotype M1.